A 248-amino-acid polypeptide reads, in one-letter code: Probable cyclic nucleotide phosphodiesterase CBUA0032 (248 aa).

Residues aspartate 13, histidine 15, aspartate 52, asparagine 82, histidine 152, histidine 191, and histidine 193 each contribute to the Fe cation site. AMP is bound by residues histidine 15, aspartate 52, and 82-83 (NH). Position 193 (histidine 193) interacts with AMP.

The protein belongs to the cyclic nucleotide phosphodiesterase class-III family. It depends on Fe(2+) as a cofactor.

The protein is Probable cyclic nucleotide phosphodiesterase CBUA0032 of Coxiella burnetii (strain RSA 493 / Nine Mile phase I).